We begin with the raw amino-acid sequence, 419 residues long: Tetraspanning orphan receptor (419 aa).

The Cytoplasmic portion of the chain corresponds to 1–28 (MPRAPALLTNDARHQFTCCLCLHVRTGT). Residues 29-49 (IIFGITQIIIQLVFISFLFLM) form a helical membrane-spanning segment. The Extracellular segment spans residues 50–165 (TFNPRLIPED…EVKIKHFSPY (116 aa)). The chain crosses the membrane as a helical span at residues 166–186 (IAVCVTTFSLAFCCFMVHGAI). Residues 187 to 193 (TKQPTHL) are Cytoplasmic-facing. The helical transmembrane segment at 194 to 214 (LPFFFIQVFDLIICLIHILGF) threads the bilayer. Residues 215 to 240 (MSSTSDLRLMIHTKTGPIYIKSTGFT) lie on the Extracellular side of the membrane. The helical transmembrane segment at 241 to 261 (FIILSISCMMLAFKAYCLGMV) threads the bilayer. The Cytoplasmic segment spans residues 262 to 419 (WDCYKYLMLN…SAPSNAHSSC (158 aa)). A compositionally biased stretch (low complexity) spans 303 to 316 (NNSIGNSGSPNEPN). Positions 303-328 (NNSIGNSGSPNEPNTRPRPEPITYDP) are disordered.

In terms of assembly, interacts (via N-terminal extracellular domain) with human C2a. In terms of processing, phosphorylated on tyrosine residues.

It localises to the cell membrane. In terms of biological role, cell surface receptor that binds to human complement C2a protein. This results in inhibition of the classical and lectin pathways of complement activation, probably due to interference with binding of C2a to C4b and interference with cleavage by C1 or MASP2 such that C3 convertase cannot be formed. This infers resistance to complement-mediated cell lysis, allowing parasite survival and infection. The polypeptide is Tetraspanning orphan receptor (Schistosoma mansoni (Blood fluke)).